A 375-amino-acid polypeptide reads, in one-letter code: MANASEPGGSGGGEAAALGLKLATLSLLLCVSLAGNVLFALLIVRERSLHRAPYYLLLDLCLADGLRALACLPAVMLAARRAAAAAGAPPGALGCKLLAFLAALFCFHAAFLLLGVGVTRYLAIAHHRFYAERLAGWPCAAMLVCAAWALALAAAFPPVLDGGGDDEDAPCALEQRPDGAPGALGFLLLLAVVVGATHLVYLRLLFFIHDRRKMRPARLVPAVSHDWTFHGPGATGQAAANWTAGFGRGPTPPALVGIRPAGPGRGARRLLVLEEFKTEKRLCKMFYAVTLLFLLLWGPYVVASYLRVLVRPGAVPQAYLTASVWLTFAQAGINPVVCFLFNRELRDCFRAQFPCCQSPRTTQATHPCDLKGIGL.

The Extracellular portion of the chain corresponds to 1–23 (MANASEPGGSGGGEAAALGLKLA). An N-linked (GlcNAc...) asparagine glycan is attached at Asn3. Residues 24–44 (TLSLLLCVSLAGNVLFALLIV) traverse the membrane as a helical segment. At 45 to 55 (RERSLHRAPYY) the chain is on the cytoplasmic side. Residues 56–76 (LLLDLCLADGLRALACLPAVM) form a helical membrane-spanning segment. Topologically, residues 77–97 (LAARRAAAAAGAPPGALGCKL) are extracellular. Cys95 and Cys171 form a disulfide bridge. Residues 98–118 (LAFLAALFCFHAAFLLLGVGV) form a helical membrane-spanning segment. Topologically, residues 119–139 (TRYLAIAHHRFYAERLAGWPC) are cytoplasmic. Residues 140-160 (AAMLVCAAWALALAAAFPPVL) form a helical membrane-spanning segment. At 161–181 (DGGGDDEDAPCALEQRPDGAP) the chain is on the extracellular side. The helical transmembrane segment at 182–202 (GALGFLLLLAVVVGATHLVYL) threads the bilayer. The Cytoplasmic portion of the chain corresponds to 203–285 (RLLFFIHDRR…FKTEKRLCKM (83 aa)). A helical transmembrane segment spans residues 286–306 (FYAVTLLFLLLWGPYVVASYL). Over 307 to 320 (RVLVRPGAVPQAYL) the chain is Extracellular. A helical membrane pass occupies residues 321-341 (TASVWLTFAQAGINPVVCFLF). Residues 342–375 (NRELRDCFRAQFPCCQSPRTTQATHPCDLKGIGL) lie on the Cytoplasmic side of the membrane.

The protein belongs to the G-protein coupled receptor 1 family. As to expression, highly expressed as a 3.0 kb transcript in brain, ovary, testis, heart, prostate and peripheral Leukocytes. Lower levels in pancreas and small intestine. A 2.3 kb transcript was also found in peripheral Leukocytes. In brain regions, detected as a 3.0 kb transcript in all regions tested. Highest levels in the caudate nucleus, putamen, hippocampus and subthalamic nucleus. Lowest level in the cerebellum.

It is found in the cell membrane. Its function is as follows. Orphan receptor. Possible candidate for amine-like G-protein coupled receptor. The chain is Probable G-protein coupled receptor 27 (GPR27) from Homo sapiens (Human).